The sequence spans 188 residues: F-box only protein 36 (188 aa).

The region spanning 91-137 (FDFLERLSDDLLLNIISYLDLEDIARLCQTSHRFAKLCMSDKLWEQI) is the F-box domain.

Directly interacts with SKP1 and CUL1.

In terms of biological role, substrate-recognition component of the SCF (SKP1-CUL1-F-box protein)-type E3 ubiquitin ligase complex. The polypeptide is F-box only protein 36 (FBXO36) (Pongo abelii (Sumatran orangutan)).